The chain runs to 338 residues: Peptidoglycan deacetylase-like protein FGM2 (338 aa).

Zn(2+)-binding residues include Asp-49, His-124, and His-128. Residues 65 to 257 form the NodB homology domain; it reads LSDYSAGIFA…VTNSHGFVSS (193 aa).

This sequence belongs to the polysaccharide deacetylase family.

Its function is as follows. Peptidoglycan deacetylase-like protein; part of the Fg3_54/C64 gene cluster that mediates the biosynthesis of the octapeptide fusaoctaxin A, a virulence factor that is required for cell-to-cell invasiveness of plant host. The 2 nonribosomal peptide synthetases NRPS9 and NRPS5 form an assembly line which likely utilizes GABA as a starter unit (loaded on the unique module M1 of NRPS9) and sequentially incorporates seven extender units composed of the residues L-Ala, L-allo-Ile, L-Ser, L-Val, L-Ser, L-Leu and L-Leu, respectively. During the process, each of the residues that are tethered on modules M3-M7 of NRPS5 containing an E domain can undergo an epimerization reaction to produce a D-configuration before the transpeptidation reaction occurs. The elongation of the peptidyl chain might be terminated by module M8-mediated L-Leu incorporation, followed by R domain-catalyzed 4 electron reduction to release the resulting octapeptide from the assembly line as an alcohol. Fusaoctaxin A is cleaved by the cluster specific ABC transporter FGM5 to the pentapeptide fusapentaxin A and the tripeptide fusatrixin A. The other enzymes from the cluster, FGM1, FGM2, FGM3 and FGM9 seem not to be involved in the biosynthesis of fusaoctaxin A and their functions have still to be determined. The sequence is that of Peptidoglycan deacetylase-like protein FGM2 from Gibberella zeae (strain ATCC MYA-4620 / CBS 123657 / FGSC 9075 / NRRL 31084 / PH-1) (Wheat head blight fungus).